We begin with the raw amino-acid sequence, 185 residues long: Tetrahydromethanopterin S-methyltransferase subunit A 2 (185 aa).

The Cytoplasmic segment spans residues 1 to 21 (MVDKKVDKKPVPEDWPHIVGD). Residues 22–38 (YVVGDAESPVAVVTLGS) traverse the membrane as a helical segment. Residues 39–185 (HMEDEPVRAG…LNKNKPDENT (147 aa)) lie on the Extracellular side of the membrane. His88 provides a ligand contact to 5-hydroxybenzimidazolylcob(I)amide.

It belongs to the MtrA family. In terms of assembly, the complex is composed of 8 subunits; MtrA, MtrB, MtrC, MtrD, MtrE, MtrF, MtrG and MtrH. It depends on 5-hydroxybenzimidazolylcob(I)amide as a cofactor.

It localises to the cell membrane. The catalysed reaction is 5-methyl-5,6,7,8-tetrahydromethanopterin + coenzyme M + 2 Na(+)(in) = 5,6,7,8-tetrahydromethanopterin + methyl-coenzyme M + 2 Na(+)(out). The protein operates within one-carbon metabolism; methanogenesis from CO(2); methyl-coenzyme M from 5,10-methylene-5,6,7,8-tetrahydromethanopterin: step 2/2. Functionally, part of a complex that catalyzes the formation of methyl-coenzyme M and tetrahydromethanopterin from coenzyme M and methyl-tetrahydromethanopterin. This is an energy-conserving, sodium-ion translocating step. This is Tetrahydromethanopterin S-methyltransferase subunit A 2 from Methanothermobacter marburgensis (strain ATCC BAA-927 / DSM 2133 / JCM 14651 / NBRC 100331 / OCM 82 / Marburg) (Methanobacterium thermoautotrophicum).